The following is a 712-amino-acid chain: Elongation factor G (712 aa).

The tr-type G domain occupies 8–290 (TRYRNIGISA…AVIEFLPSPT (283 aa)). GTP is bound by residues 17–24 (AHIDAGKT), 88–92 (DTPGH), and 142–145 (NKMD).

Belongs to the TRAFAC class translation factor GTPase superfamily. Classic translation factor GTPase family. EF-G/EF-2 subfamily.

Its subcellular location is the cytoplasm. Catalyzes the GTP-dependent ribosomal translocation step during translation elongation. During this step, the ribosome changes from the pre-translocational (PRE) to the post-translocational (POST) state as the newly formed A-site-bound peptidyl-tRNA and P-site-bound deacylated tRNA move to the P and E sites, respectively. Catalyzes the coordinated movement of the two tRNA molecules, the mRNA and conformational changes in the ribosome. The chain is Elongation factor G from Acinetobacter baumannii (strain SDF).